A 139-amino-acid polypeptide reads, in one-letter code: Holo-[acyl-carrier-protein] synthase (139 aa).

Residues Asp9 and Glu63 each contribute to the Mg(2+) site.

The protein belongs to the P-Pant transferase superfamily. AcpS family. Mg(2+) serves as cofactor.

The protein resides in the cytoplasm. It carries out the reaction apo-[ACP] + CoA = holo-[ACP] + adenosine 3',5'-bisphosphate + H(+). Functionally, transfers the 4'-phosphopantetheine moiety from coenzyme A to a Ser of acyl-carrier-protein. This is Holo-[acyl-carrier-protein] synthase from Wigglesworthia glossinidia brevipalpis.